A 112-amino-acid polypeptide reads, in one-letter code: Phosphoribosyl-AMP cyclohydrolase (112 aa).

Aspartate 76 lines the Mg(2+) pocket. Cysteine 77 lines the Zn(2+) pocket. Mg(2+)-binding residues include aspartate 78 and aspartate 80. Zn(2+) contacts are provided by cysteine 93 and cysteine 100.

The protein belongs to the PRA-CH family. In terms of assembly, homodimer. Requires Mg(2+) as cofactor. It depends on Zn(2+) as a cofactor.

Its subcellular location is the cytoplasm. It carries out the reaction 1-(5-phospho-beta-D-ribosyl)-5'-AMP + H2O = 1-(5-phospho-beta-D-ribosyl)-5-[(5-phospho-beta-D-ribosylamino)methylideneamino]imidazole-4-carboxamide. It functions in the pathway amino-acid biosynthesis; L-histidine biosynthesis; L-histidine from 5-phospho-alpha-D-ribose 1-diphosphate: step 3/9. Its function is as follows. Catalyzes the hydrolysis of the adenine ring of phosphoribosyl-AMP. This Streptococcus thermophilus (strain ATCC BAA-491 / LMD-9) protein is Phosphoribosyl-AMP cyclohydrolase.